Consider the following 276-residue polypeptide: NAD kinase (276 aa).

Aspartate 61 acts as the Proton acceptor in catalysis. Residues 61-62 (DG), 134-135 (ND), arginine 145, lysine 162, aspartate 164, valine 172, 175-180 (TAYSFS), and glutamine 234 contribute to the NAD(+) site.

It belongs to the NAD kinase family. It depends on a divalent metal cation as a cofactor.

The protein resides in the cytoplasm. It carries out the reaction NAD(+) + ATP = ADP + NADP(+) + H(+). Functionally, involved in the regulation of the intracellular balance of NAD and NADP, and is a key enzyme in the biosynthesis of NADP. Catalyzes specifically the phosphorylation on 2'-hydroxyl of the adenosine moiety of NAD to yield NADP. The sequence is that of NAD kinase from Clostridium perfringens (strain 13 / Type A).